A 102-amino-acid polypeptide reads, in one-letter code: Small ribosomal subunit protein bS6 (102 aa).

The protein belongs to the bacterial ribosomal protein bS6 family.

Its function is as follows. Binds together with bS18 to 16S ribosomal RNA. The sequence is that of Small ribosomal subunit protein bS6 from Solidesulfovibrio magneticus (strain ATCC 700980 / DSM 13731 / RS-1) (Desulfovibrio magneticus).